We begin with the raw amino-acid sequence, 311 residues long: Bifunctional protein FolD (311 aa).

NADP(+) is bound by residues 180–182, S209, and I250; that span reads GRS.

This sequence belongs to the tetrahydrofolate dehydrogenase/cyclohydrolase family. Homodimer.

The catalysed reaction is (6R)-5,10-methylene-5,6,7,8-tetrahydrofolate + NADP(+) = (6R)-5,10-methenyltetrahydrofolate + NADPH. The enzyme catalyses (6R)-5,10-methenyltetrahydrofolate + H2O = (6R)-10-formyltetrahydrofolate + H(+). It functions in the pathway one-carbon metabolism; tetrahydrofolate interconversion. In terms of biological role, catalyzes the oxidation of 5,10-methylenetetrahydrofolate to 5,10-methenyltetrahydrofolate and then the hydrolysis of 5,10-methenyltetrahydrofolate to 10-formyltetrahydrofolate. In Haloquadratum walsbyi (strain DSM 16790 / HBSQ001), this protein is Bifunctional protein FolD.